We begin with the raw amino-acid sequence, 616 residues long: Proline--tRNA ligase (616 aa).

It belongs to the class-II aminoacyl-tRNA synthetase family. ProS type 1 subfamily. Homodimer.

The protein localises to the cytoplasm. It catalyses the reaction tRNA(Pro) + L-proline + ATP = L-prolyl-tRNA(Pro) + AMP + diphosphate. Catalyzes the attachment of proline to tRNA(Pro) in a two-step reaction: proline is first activated by ATP to form Pro-AMP and then transferred to the acceptor end of tRNA(Pro). As ProRS can inadvertently accommodate and process non-cognate amino acids such as alanine and cysteine, to avoid such errors it has two additional distinct editing activities against alanine. One activity is designated as 'pretransfer' editing and involves the tRNA(Pro)-independent hydrolysis of activated Ala-AMP. The other activity is designated 'posttransfer' editing and involves deacylation of mischarged Ala-tRNA(Pro). The misacylated Cys-tRNA(Pro) is not edited by ProRS. This Lactococcus lactis subsp. cremoris (strain MG1363) protein is Proline--tRNA ligase.